Here is a 561-residue protein sequence, read N- to C-terminus: Acylcarnitine hydrolase (561 aa).

The N-terminal stretch at 1 to 26 is a signal peptide; that stretch reads MTRNQLHNWLNAGFFGLLLLLIHVQG. C97 and C125 form a disulfide bridge. S230 functions as the Acyl-ester intermediate in the catalytic mechanism. The cysteines at positions 282 and 293 are disulfide-linked. Catalysis depends on charge relay system residues E347 and H459. Residues 558–561 carry the Prevents secretion from ER motif; it reads HREL.

Belongs to the type-B carboxylesterase/lipase family. In terms of tissue distribution, detected in liver (at protein level).

The protein resides in the microsome. The protein localises to the endoplasmic reticulum. The catalysed reaction is an O-acyl-(R)-carnitine + H2O = (R)-carnitine + a fatty acid + H(+). It carries out the reaction all-trans-retinyl hexadecanoate + H2O = all-trans-retinol + hexadecanoate + H(+). Functionally, hydrolase with high activity towards palmitoylcarnitine. Is also active with p-nitrophenylacetate and alpha-naphthylacetate. May also hydrolyze retinyl esters. The polypeptide is Acylcarnitine hydrolase (Mus musculus (Mouse)).